Consider the following 532-residue polypeptide: Small ribosomal subunit protein uS2cz (532 aa).

The tract at residues 1–271 is N-terminal extension; the sequence is METLEKNFKK…SPISSKEKKA (271 aa). 3 consecutive TRAM domains span residues 38–97, 127–186, and 197–260; these read ALQA…SILN, DFKV…KPIL, and NQMI…KILK.

This sequence belongs to the universal ribosomal protein uS2 family.

It is found in the plastid. Its subcellular location is the chloroplast. The polypeptide is Small ribosomal subunit protein uS2cz (rps2-1) (Tetradesmus obliquus (Green alga)).